Consider the following 179-residue polypeptide: TM2 domain-containing protein Y66D12A.21 (179 aa).

The signal sequence occupies residues methionine 1–alanine 18. Topologically, residues threonine 19–cysteine 82 are extracellular. N-linked (GlcNAc...) asparagine glycosylation is present at asparagine 75. A helical membrane pass occupies residues histidine 83–isoleucine 105. Residues valine 88–isoleucine 135 enclose the TM2 domain. The Cytoplasmic portion of the chain corresponds to aspartate 106 to tyrosine 109. Residues leucine 110–valine 132 form a helical membrane-spanning segment. The Extracellular segment spans residues aspartate 133–leucine 179. The N-linked (GlcNAc...) asparagine glycan is linked to asparagine 169.

The protein belongs to the TM2 family.

It localises to the membrane. The chain is TM2 domain-containing protein Y66D12A.21 from Caenorhabditis elegans.